We begin with the raw amino-acid sequence, 295 residues long: MSTQTHPAPLRTAIVGTGNIGTDLLLKVEASPLLTCVLFAGRRAESPGIELARGRGVATSTGGIDAVVDAADDIDLVFDATSARDAVRHWAVIKPLGLPFIDLTPANQGKFCVPALNLEDCLDEQYLSMVTCGGQAAVPMARCITQIAGHVDYLEIVSASASASVGPASRANLDEYVHTTEQATAEFCSTARTKTVLIINPADPGIVMRNSIAVSTTERIDIDALRDSVTAMEKEIHSYVPGYRIVVPPVATGDCYLLTVEVEGLGDYFPRSAGNLDIITCAAVAAAEARSGLRR.

17 to 20 (TGNI) is an NAD(+) binding site. Catalysis depends on Cys132, which acts as the Acyl-thioester intermediate. NAD(+)-binding positions include 164 to 172 (SVGPASRAN) and Asn275.

Belongs to the acetaldehyde dehydrogenase family.

The enzyme catalyses acetaldehyde + NAD(+) + CoA = acetyl-CoA + NADH + H(+). The protein is Acetaldehyde dehydrogenase 2 of Salinispora arenicola (strain CNS-205).